A 480-amino-acid chain; its full sequence is Protein nucleotidyltransferase YdiU (480 aa).

ATP contacts are provided by Gly86, Gly88, Arg89, Lys109, Asp121, Gly122, Arg172, and Arg179. Catalysis depends on Asp248, which acts as the Proton acceptor. Asn249 and Asp258 together coordinate Mg(2+). Asp258 is a binding site for ATP.

The protein belongs to the SELO family. Requires Mg(2+) as cofactor. It depends on Mn(2+) as a cofactor.

The enzyme catalyses L-seryl-[protein] + ATP = 3-O-(5'-adenylyl)-L-seryl-[protein] + diphosphate. It carries out the reaction L-threonyl-[protein] + ATP = 3-O-(5'-adenylyl)-L-threonyl-[protein] + diphosphate. The catalysed reaction is L-tyrosyl-[protein] + ATP = O-(5'-adenylyl)-L-tyrosyl-[protein] + diphosphate. It catalyses the reaction L-histidyl-[protein] + UTP = N(tele)-(5'-uridylyl)-L-histidyl-[protein] + diphosphate. The enzyme catalyses L-seryl-[protein] + UTP = O-(5'-uridylyl)-L-seryl-[protein] + diphosphate. It carries out the reaction L-tyrosyl-[protein] + UTP = O-(5'-uridylyl)-L-tyrosyl-[protein] + diphosphate. In terms of biological role, nucleotidyltransferase involved in the post-translational modification of proteins. It can catalyze the addition of adenosine monophosphate (AMP) or uridine monophosphate (UMP) to a protein, resulting in modifications known as AMPylation and UMPylation. The chain is Protein nucleotidyltransferase YdiU from Salmonella paratyphi B (strain ATCC BAA-1250 / SPB7).